A 180-amino-acid chain; its full sequence is uncharacterized protein (180 aa).

The disordered stretch occupies residues 138–180 (SVMPVPMPQQNSDNGSTPHIVDSSKSKDKSSNDGDNGVFTGDE). Residues 145-154 (PQQNSDNGST) show a composition bias toward polar residues. Residues 159-169 (DSSKSKDKSSN) are compositionally biased toward basic and acidic residues.

This is an uncharacterized protein from Acidianus filamentous virus 2 (isolate Italy/Pozzuoli) (AFV-2).